The chain runs to 454 residues: Serine/arginine (SR)-type shuttling mRNA binding protein HRB1 (454 aa).

The tract at residues 1–141 (MSDQERGSEN…SSGARGDYGP (141 aa)) is disordered. Residues 14 to 24 (SRSRSRSPVRR) are compositionally biased toward basic residues. Composition is skewed to basic and acidic residues over residues 25–38 (RMSD…DNHL) and 50–113 (KFAD…DYPR). An Omega-N-methylarginine modification is found at Arg127. 2 RRM domains span residues 161–237 (NSIF…QDNP) and 261–338 (HEVI…SKES). 3 positions are modified to phosphoserine: Ser338, Ser343, and Ser355. Residues 376 to 453 (RLIYCSNLPF…CDLDISYAKR (78 aa)) form the RRM 3 domain.

Post-translationally, methylated by HMT1.

The protein localises to the cytoplasm. It localises to the nucleus. Its subcellular location is the P-body. The protein resides in the stress granule. Functionally, binds to intron-containing transcripts and is involved in quality control for the export of spliced mRNAs from the nucleus. Binds to pre-mRNAs until splicing is completed or until faulty mRNAs are degraded. On correctly spliced mRNAs, GBP2 and HRB1 recruit MEX67 to allow nuclear export. On faulty mRNAs, GBP2 and HRB1 associate with the TRAMP complex that guides those pre-mRNAs to the exosome for degradation. This chain is Serine/arginine (SR)-type shuttling mRNA binding protein HRB1, found in Saccharomyces cerevisiae (strain ATCC 204508 / S288c) (Baker's yeast).